A 341-amino-acid chain; its full sequence is S-adenosylmethionine:tRNA ribosyltransferase-isomerase (341 aa).

The protein belongs to the QueA family. Monomer.

The protein localises to the cytoplasm. It carries out the reaction 7-aminomethyl-7-carbaguanosine(34) in tRNA + S-adenosyl-L-methionine = epoxyqueuosine(34) in tRNA + adenine + L-methionine + 2 H(+). The protein operates within tRNA modification; tRNA-queuosine biosynthesis. In terms of biological role, transfers and isomerizes the ribose moiety from AdoMet to the 7-aminomethyl group of 7-deazaguanine (preQ1-tRNA) to give epoxyqueuosine (oQ-tRNA). The chain is S-adenosylmethionine:tRNA ribosyltransferase-isomerase from Chlorobium luteolum (strain DSM 273 / BCRC 81028 / 2530) (Pelodictyon luteolum).